We begin with the raw amino-acid sequence, 579 residues long: Nuclear hormone receptor family member nhr-47 (579 aa).

The nuclear receptor DNA-binding region spans 8-83 (GTLCAVCDDI…VGMDKNSIQN (76 aa)). 2 NR C4-type zinc fingers span residues 11 to 31 (CAVC…CNGC) and 47 to 71 (CQGN…LQKC). The segment at 87–128 (RIGYTKRKRRHDDNDMEGGVHHSEHIRDGSSGSPQMNDESPE) is disordered. Residues 104-114 (GGVHHSEHIRD) show a composition bias toward basic and acidic residues. An NR LBD domain is found at 164-553 (ADLHSYATLE…SLVKETSLGP (390 aa)).

This sequence belongs to the nuclear hormone receptor family.

The protein localises to the nucleus. In terms of biological role, orphan nuclear receptor. This is Nuclear hormone receptor family member nhr-47 (nhr-47) from Caenorhabditis elegans.